Here is a 131-residue protein sequence, read N- to C-terminus: Small ribosomal subunit protein uS8 (131 aa).

It belongs to the universal ribosomal protein uS8 family. Part of the 30S ribosomal subunit. Contacts proteins S5 and S12.

Its function is as follows. One of the primary rRNA binding proteins, it binds directly to 16S rRNA central domain where it helps coordinate assembly of the platform of the 30S subunit. The chain is Small ribosomal subunit protein uS8 from Bordetella avium (strain 197N).